The chain runs to 403 residues: Glucose/galactose-binding lipoprotein (403 aa).

The signal sequence occupies residues 1 to 25 (MKENSCTACSRRLALFVGAAVLVVG). Cys26 is lipidated: N-palmitoyl cysteine. A lipid anchor (S-diacylglycerol cysteine) is attached at Cys26.

This sequence belongs to the bacterial solute-binding protein 2 family.

It is found in the cell membrane. Its function is as follows. May be involved in the transport of sugars. May have a role in chemotaxis. The protein is Glucose/galactose-binding lipoprotein (mglB) of Treponema pallidum (strain Nichols).